The primary structure comprises 529 residues: UDP-glucuronosyltransferase 2B23 (529 aa).

The first 24 residues, 1 to 24, serve as a signal peptide directing secretion; the sequence is MSVKWTSVILLIQLSFYFSSGSCG. N-linked (GlcNAc...) asparagine glycans are attached at residues N67 and N68. A helical transmembrane segment spans residues 494–514; sequence IGFLLACVATVIFIIMKCCLF.

This sequence belongs to the UDP-glycosyltransferase family. Expressed in several tissues, including the prostate, mammary gland, epididymis, testis and ovary.

The protein localises to the microsome membrane. It is found in the endoplasmic reticulum membrane. It catalyses the reaction glucuronate acceptor + UDP-alpha-D-glucuronate = acceptor beta-D-glucuronoside + UDP + H(+). UDPGTs are of major importance in the conjugation and subsequent elimination of potentially toxic xenobiotics and endogenous compounds. This isozyme has glucuronidating capacity on 6 steroids and the bile acid, hyodeoxycholic acid. May potentially play an important role in estrogen and androgen catabolism in peripheral steroid target tissues. The chain is UDP-glucuronosyltransferase 2B23 (UGT2B23) from Macaca fascicularis (Crab-eating macaque).